Reading from the N-terminus, the 377-residue chain is Transmembrane protein 237A (377 aa).

Basic and acidic residues-rich tracts occupy residues methionine 1–proline 11, leucine 43–proline 64, and histidine 74–asparagine 87. The segment at methionine 1–glutamate 124 is disordered. The next 4 helical transmembrane spans lie at isoleucine 198–valine 218, leucine 239–phenylalanine 259, glycine 273–leucine 293, and proline 326–alanine 346.

This sequence belongs to the TMEM237 family.

It localises to the membrane. Its subcellular location is the cell projection. The protein localises to the cilium. Functionally, component of the transition zone in primary cilia. Required for ciliogenesis. This chain is Transmembrane protein 237A (tmem237a), found in Danio rerio (Zebrafish).